The sequence spans 199 residues: Protein-methionine-sulfoxide reductase heme-binding subunit MsrQ (199 aa).

Helical transmembrane passes span Ile8–Trp28, Phe54–Ile74, Leu82–Ile102, Pro116–Thr136, Leu149–Val169, and Ile171–Tyr191.

It belongs to the MsrQ family. As to quaternary structure, heterodimer of a catalytic subunit (MsrP) and a heme-binding subunit (MsrQ). FMN serves as cofactor. It depends on heme b as a cofactor.

It is found in the cell inner membrane. Its function is as follows. Part of the MsrPQ system that repairs oxidized periplasmic proteins containing methionine sulfoxide residues (Met-O), using respiratory chain electrons. Thus protects these proteins from oxidative-stress damage caused by reactive species of oxygen and chlorine generated by the host defense mechanisms. MsrPQ is essential for the maintenance of envelope integrity under bleach stress, rescuing a wide series of structurally unrelated periplasmic proteins from methionine oxidation. MsrQ provides electrons for reduction to the reductase catalytic subunit MsrP, using the quinone pool of the respiratory chain. This chain is Protein-methionine-sulfoxide reductase heme-binding subunit MsrQ, found in Klebsiella pneumoniae (strain 342).